Reading from the N-terminus, the 155-residue chain is Transcription antitermination protein NusB (155 aa).

It belongs to the NusB family.

Its function is as follows. Involved in transcription antitermination. Required for transcription of ribosomal RNA (rRNA) genes. Binds specifically to the boxA antiterminator sequence of the ribosomal RNA (rrn) operons. The sequence is that of Transcription antitermination protein NusB from Vibrio vulnificus (strain CMCP6).